We begin with the raw amino-acid sequence, 74 residues long: WAP four-disulfide core domain protein 18 (74 aa).

Residues 1–24 (MKTATVFVLVALIFMTMTTAWALS) form the signal peptide. The WAP domain occupies 26-73 (PKEKPGACPKPPPRSFGTCDERCTGDGSCSGNMKCCSNGCGHACKPPV).

Its subcellular location is the secreted. In terms of biological role, could have proteinase inhibiting capacity. The protein is WAP four-disulfide core domain protein 18 (WFDC18) of Bos taurus (Bovine).